Here is a 467-residue protein sequence, read N- to C-terminus: Cysteine protease ATG4a (467 aa).

Residues 1-35 form a disordered region; it reads MKALCDRFVPQQCSSSSKSDTHDKSPLVSDSGPSD. The active-site Nucleophile is Cys170. Residues Asp364 and His366 contribute to the active site. The tract at residues 448-467 is disordered; that stretch reads NYGFADDDSEDEREDDWQML. The segment covering 452-467 has biased composition (acidic residues); it reads ADDDSEDEREDDWQML.

This sequence belongs to the peptidase C54 family. In terms of assembly, interacts with ATG8. In terms of tissue distribution, constitutively expressed.

It localises to the cytoplasm. It carries out the reaction [protein]-C-terminal L-amino acid-glycyl-phosphatidylethanolamide + H2O = [protein]-C-terminal L-amino acid-glycine + a 1,2-diacyl-sn-glycero-3-phosphoethanolamine. Cysteine protease that plays a key role in autophagy by mediating both proteolytic activation and delipidation of ATG8 family proteins. The protease activity is required for proteolytic activation of ATG8 family proteins: cleaves the C-terminal amino acid of ATG8 proteins to reveal a C-terminal glycine. Exposure of the glycine at the C-terminus is essential for ATG8 proteins conjugation to phosphatidylethanolamine (PE) and insertion to membranes, which is necessary for autophagy. In addition to the protease activity, also mediates delipidation of PE-conjugated ATG8 proteins. The polypeptide is Cysteine protease ATG4a (Arabidopsis thaliana (Mouse-ear cress)).